The chain runs to 351 residues: Alanine racemase (351 aa).

The active-site Proton acceptor; specific for D-alanine is K35. K35 bears the N6-(pyridoxal phosphate)lysine mark. R127 lines the substrate pocket. The active-site Proton acceptor; specific for L-alanine is Y247. Substrate is bound at residue M295.

It belongs to the alanine racemase family. Requires pyridoxal 5'-phosphate as cofactor.

It catalyses the reaction L-alanine = D-alanine. It functions in the pathway amino-acid biosynthesis; D-alanine biosynthesis; D-alanine from L-alanine: step 1/1. Catalyzes the interconversion of L-alanine and D-alanine. May also act on other amino acids. This Vesicomyosocius okutanii subsp. Calyptogena okutanii (strain HA) protein is Alanine racemase (alr).